Consider the following 327-residue polypeptide: MDVVEGKALQVSDAVYAYQLDGKGGMTAISVDAVASATQPCWLHLDYTYPESAEWLQNTPLLPEVVRDGLAGESMRPKITRLGDGTMITLRGINFNNDARPDQLVTIRVYMTDKLIVSTRHRKVYSIDNVLNDLQSGTGPTGSGHWLVDIADGLTDHTSEFIEDLHDKIIDLEDDLMEQKVPPRGQMALLRKQLIVLRRYMAPQRDVFSRLASERLPWMNDDDRRRMQEISERLGRGLEDLDGSIARTAVLSDEISSLMADAMNRRTYTMSLLAMVFLPTTFLTGLFGVNLGGIPGNTDAFGFTIFCMMLVVLVLSVAWWLKRSKWL.

At 1-271 (MDVVEGKALQ…AMNRRTYTMS (271 aa)) the chain is on the cytoplasmic side. The helical transmembrane segment at 272 to 292 (LLAMVFLPTTFLTGLFGVNLG) threads the bilayer. Topologically, residues 293 to 300 (GIPGNTDA) are periplasmic. Residues 301-321 (FGFTIFCMMLVVLVLSVAWWL) form a helical membrane-spanning segment. Residues 322–327 (KRSKWL) are Cytoplasmic-facing.

This sequence belongs to the CorA metal ion transporter (MIT) (TC 1.A.35) family.

It localises to the cell inner membrane. The catalysed reaction is Zn(2+)(out) + H(+)(out) = Zn(2+)(in) + H(+)(in). Zinc transporter. Acts as a Zn(2+):proton symporter, which likely mediates zinc ion uptake. This is Zinc transport protein ZntB from Yersinia pseudotuberculosis serotype O:1b (strain IP 31758).